Here is a 462-residue protein sequence, read N- to C-terminus: ATP synthase subunit beta (462 aa).

151–158 (GGAGVGKT) lines the ATP pocket.

This sequence belongs to the ATPase alpha/beta chains family. F-type ATPases have 2 components, CF(1) - the catalytic core - and CF(0) - the membrane proton channel. CF(1) has five subunits: alpha(3), beta(3), gamma(1), delta(1), epsilon(1). CF(0) has four main subunits: a(1), b(1), b'(1) and c(9-12).

The protein localises to the cell inner membrane. It catalyses the reaction ATP + H2O + 4 H(+)(in) = ADP + phosphate + 5 H(+)(out). In terms of biological role, produces ATP from ADP in the presence of a proton gradient across the membrane. The catalytic sites are hosted primarily by the beta subunits. The sequence is that of ATP synthase subunit beta from Chlorobium chlorochromatii (strain CaD3).